The primary structure comprises 577 residues: CTP synthase (577 aa).

The interval 1-268 (MDPAFIFITG…GALLCERLRL (268 aa)) is amidoligase domain. A CTP-binding site is contributed by Ser14. Ser14 provides a ligand contact to UTP. Residue 15–20 (SLGKGI) coordinates ATP. Tyr55 serves as a coordination point for L-glutamine. Residue Asp72 coordinates ATP. Positions 72 and 142 each coordinate Mg(2+). CTP is bound by residues 149-151 (DIE), 189-194 (KTKPLQ), and Lys225. UTP contacts are provided by residues 189 to 194 (KTKPLQ) and Lys225. In terms of domain architecture, Glutamine amidotransferase type-1 spans 333-575 (TVALVGKYVS…VAAGLERKDS (243 aa)). L-glutamine is bound at residue Gly396. Cys423 acts as the Nucleophile; for glutamine hydrolysis in catalysis. L-glutamine contacts are provided by residues 424–427 (LGMQ), Glu447, and Arg503. Catalysis depends on residues His548 and Glu550.

This sequence belongs to the CTP synthase family. As to quaternary structure, homotetramer.

It catalyses the reaction UTP + L-glutamine + ATP + H2O = CTP + L-glutamate + ADP + phosphate + 2 H(+). It carries out the reaction L-glutamine + H2O = L-glutamate + NH4(+). The enzyme catalyses UTP + NH4(+) + ATP = CTP + ADP + phosphate + 2 H(+). It functions in the pathway pyrimidine metabolism; CTP biosynthesis via de novo pathway; CTP from UDP: step 2/2. Its activity is regulated as follows. Allosterically activated by GTP, when glutamine is the substrate; GTP has no effect on the reaction when ammonia is the substrate. The allosteric effector GTP functions by stabilizing the protein conformation that binds the tetrahedral intermediate(s) formed during glutamine hydrolysis. Inhibited by the product CTP, via allosteric rather than competitive inhibition. In terms of biological role, catalyzes the ATP-dependent amination of UTP to CTP with either L-glutamine or ammonia as the source of nitrogen. Regulates intracellular CTP levels through interactions with the four ribonucleotide triphosphates. This is CTP synthase from Treponema pallidum (strain Nichols).